Reading from the N-terminus, the 131-residue chain is Large-conductance mechanosensitive channel (131 aa).

The next 3 helical transmembrane spans lie at 8 to 28 (FAIR…GAFG), 30 to 50 (IVSS…LGGI), and 67 to 87 (GAFI…FLFV).

This sequence belongs to the MscL family. Homopentamer.

Its subcellular location is the cell membrane. In terms of biological role, channel that opens in response to stretch forces in the membrane lipid bilayer. May participate in the regulation of osmotic pressure changes within the cell. The sequence is that of Large-conductance mechanosensitive channel from Geobacillus kaustophilus (strain HTA426).